Here is a 732-residue protein sequence, read N- to C-terminus: 1,4-alpha-glucan branching enzyme GlgB (732 aa).

The active-site Nucleophile is Asp-408. Glu-461 functions as the Proton donor in the catalytic mechanism.

This sequence belongs to the glycosyl hydrolase 13 family. GlgB subfamily. Monomer.

It catalyses the reaction Transfers a segment of a (1-&gt;4)-alpha-D-glucan chain to a primary hydroxy group in a similar glucan chain.. The protein operates within glycan biosynthesis; glycogen biosynthesis. In terms of biological role, catalyzes the formation of the alpha-1,6-glucosidic linkages in glycogen by scission of a 1,4-alpha-linked oligosaccharide from growing alpha-1,4-glucan chains and the subsequent attachment of the oligosaccharide to the alpha-1,6 position. The chain is 1,4-alpha-glucan branching enzyme GlgB from Rhodococcus jostii (strain RHA1).